A 179-amino-acid polypeptide reads, in one-letter code: Large ribosomal subunit protein uL5 (179 aa).

This sequence belongs to the universal ribosomal protein uL5 family. In terms of assembly, part of the 50S ribosomal subunit; part of the 5S rRNA/L5/L18/L25 subcomplex. Contacts the 5S rRNA and the P site tRNA. Forms a bridge to the 30S subunit in the 70S ribosome.

In terms of biological role, this is one of the proteins that bind and probably mediate the attachment of the 5S RNA into the large ribosomal subunit, where it forms part of the central protuberance. In the 70S ribosome it contacts protein S13 of the 30S subunit (bridge B1b), connecting the 2 subunits; this bridge is implicated in subunit movement. Contacts the P site tRNA; the 5S rRNA and some of its associated proteins might help stabilize positioning of ribosome-bound tRNAs. The protein is Large ribosomal subunit protein uL5 of Shewanella oneidensis (strain ATCC 700550 / JCM 31522 / CIP 106686 / LMG 19005 / NCIMB 14063 / MR-1).